Consider the following 3371-residue polypeptide: Protocadherin-23 (3371 aa).

Positions 1 to 40 (MSPCGRKMGEGRQQRRAPVGKLLLLPGRRDTPHGRSGSSG) are disordered. Residues 1–46 (MSPCGRKMGEGRQQRRAPVGKLLLLPGRRDTPHGRSGSSGARTQRS) lie on the Cytoplasmic side of the membrane. A helical transmembrane segment spans residues 47–67 (LLWLLVHVWLWAASGSSAQLF). Cadherin domains are found at residues 65–167 (QLFN…SPRF), 168–296 (PLDS…PPVF), 297–413 (EQDE…RPAI), 424–539 (ARVS…PPLF), 540–663 (SQQH…EPIF), 664–771 (WRQV…HPVF), 772–881 (NPST…RPKY), 877–979 (ERPK…HPAF), 980–1082 (LRTS…SPSW), 1085–1191 (EHLV…SPTF), 1192–1294 (LHDV…RPFF), 1299–1415 (PGKE…IPEN), 1404–1510 (SQNI…SPSF), 1511–1620 (QDEL…NPTF), 1620–1724 (FISF…APVF), 1725–1829 (KQHL…APEF), 1830–1933 (IVSS…SPSF), 1934–2038 (PTLY…DPVL), 2039–2130 (EQNP…VIHM), 2140–2242 (SHHL…SPCF), 2243–2347 (EQSI…APAF), 2347–2447 (FLPS…PPVF), 2448–2549 (SQDF…APEF), 2550–2665 (TVKS…PPNF), 2666–2769 (SSLS…APQF), 2770–2880 (MFSS…EPIF), and 2881–2988 (TQDQ…TPLA). Residues 68–2986 (NLTLSVDEGL…NVSFSSEGTP (2919 aa)) lie on the Extracellular side of the membrane. Asn669, Asn772, Asn814, Asn905, Asn966, Asn1038, Asn1172, and Asn1275 each carry an N-linked (GlcNAc...) asparagine glycan. N-linked (GlcNAc...) asparagine glycosylation is found at Asn1487, Asn1595, Asn1617, and Asn1664. Asn1898 is a glycosylation site (N-linked (GlcNAc...) asparagine). 3 N-linked (GlcNAc...) asparagine glycosylation sites follow: Asn2054, Asn2070, and Asn2098. Asn2329 is a glycosylation site (N-linked (GlcNAc...) asparagine). 4 N-linked (GlcNAc...) asparagine glycosylation sites follow: Asn2479, Asn2497, Asn2555, and Asn2664. Asn2929 and Asn2977 each carry an N-linked (GlcNAc...) asparagine glycan. The helical transmembrane segment at 2987–3017 (LAVFASSFSISLVVSFLVFLILICILIVMIL) threads the bilayer. The Cytoplasmic portion of the chain corresponds to 3018–3371 (RHKQKDTINN…ELKAEDEVQI (354 aa)). Residues 3117-3140 (KCSDSALSDHESRVPDSGIPRDSD) show a composition bias toward basic and acidic residues. Positions 3117 to 3141 (KCSDSALSDHESRVPDSGIPRDSDQ) are disordered.

As to expression, cerebral cortex and testis.

It localises to the membrane. Functionally, calcium-dependent cell-adhesion protein. The sequence is that of Protocadherin-23 (DCHS2) from Homo sapiens (Human).